The sequence spans 525 residues: ATP synthase subunit alpha (525 aa).

169–176 (GDRQTGKT) is a binding site for ATP.

This sequence belongs to the ATPase alpha/beta chains family. F-type ATPases have 2 components, CF(1) - the catalytic core - and CF(0) - the membrane proton channel. CF(1) has five subunits: alpha(3), beta(3), gamma(1), delta(1), epsilon(1). CF(0) has three main subunits: a(1), b(2) and c(9-12). The alpha and beta chains form an alternating ring which encloses part of the gamma chain. CF(1) is attached to CF(0) by a central stalk formed by the gamma and epsilon chains, while a peripheral stalk is formed by the delta and b chains.

The protein localises to the cell membrane. It carries out the reaction ATP + H2O + 4 H(+)(in) = ADP + phosphate + 5 H(+)(out). Produces ATP from ADP in the presence of a proton gradient across the membrane. The alpha chain is a regulatory subunit. This chain is ATP synthase subunit alpha, found in Mycoplasma capricolum subsp. capricolum (strain California kid / ATCC 27343 / NCTC 10154).